We begin with the raw amino-acid sequence, 225 residues long: Protein ZW2 (225 aa).

A DOG1 domain is found at 7-225 (SETFASFFND…FYLRLRDLGV (219 aa)).

In terms of biological role, may be involved in the regulation of abscisic acid (ABA) sensitivity. This chain is Protein ZW2, found in Arabidopsis thaliana (Mouse-ear cress).